The sequence spans 225 residues: Ribonuclease 3 (225 aa).

The RNase III domain maps to 5–127 (IDKLERKIGY…IIGAVYLDSD (123 aa)). Glu-40 is a binding site for Mg(2+). Residue Asp-44 is part of the active site. Asp-113 and Glu-116 together coordinate Mg(2+). Residue Glu-116 is part of the active site. The 71-residue stretch at 154 to 224 (DPKTRLQEFL…AETALEQLSN (71 aa)) folds into the DRBM domain.

This sequence belongs to the ribonuclease III family. In terms of assembly, homodimer. The cofactor is Mg(2+).

It localises to the cytoplasm. The catalysed reaction is Endonucleolytic cleavage to 5'-phosphomonoester.. Digests double-stranded RNA. Involved in the processing of primary rRNA transcript to yield the immediate precursors to the large and small rRNAs (23S and 16S). Processes some mRNAs, and tRNAs when they are encoded in the rRNA operon. Processes pre-crRNA and tracrRNA of type II CRISPR loci if present in the organism. The sequence is that of Ribonuclease 3 from Vibrio atlanticus (strain LGP32) (Vibrio splendidus (strain Mel32)).